We begin with the raw amino-acid sequence, 691 residues long: Elongation factor G (691 aa).

In terms of domain architecture, tr-type G spans 8-282 (ERVRNIGIAA…AVVDYLPAPV (275 aa)). Residues 17 to 24 (AHIDAGKT), 81 to 85 (DTPGH), and 135 to 138 (NKMD) contribute to the GTP site.

This sequence belongs to the TRAFAC class translation factor GTPase superfamily. Classic translation factor GTPase family. EF-G/EF-2 subfamily.

It localises to the cytoplasm. Catalyzes the GTP-dependent ribosomal translocation step during translation elongation. During this step, the ribosome changes from the pre-translocational (PRE) to the post-translocational (POST) state as the newly formed A-site-bound peptidyl-tRNA and P-site-bound deacylated tRNA move to the P and E sites, respectively. Catalyzes the coordinated movement of the two tRNA molecules, the mRNA and conformational changes in the ribosome. This chain is Elongation factor G, found in Prochlorococcus marinus (strain MIT 9313).